Here is a 416-residue protein sequence, read N- to C-terminus: MVRPRRAPYRSGAGGPLGGRGRPPRPLVVRAVRSRSWPASPRGPQPPRIRARSAPPMEGARVFGALGPIGPSSPGLTLGGLAVSEHRLSNKLLAWSGVLEWQEKRRPYSDSTAKLKRTLPCQAYVNQGENLETDQWPQKLIMQLIPQQLLTTLGPLFRNSQLAQFHFTNRDCDSLKGLCRIMGNGFAGCMLFPHISPCEVRVLMLLYSSKKKIFMGLIPYDQSGFVSAIRQVITTRKQAVGPGGVNSGPVQIVNNKFLAWSGVMEWQEPRPEPNSRSKRWLPSHVYVNQGEILRTEQWPRKLYMQLIPQQLLTTLVPLFRNSRLVQFHFTKDLETLKSLCRIMDNGFAGCVHFSYKASCEIRVLMLLYSSEKKIFIGLIPHDQGNFVNGIRRVIANQQQVLQRNLEQEQQQRGMGG.

The interval 1–53 is disordered; sequence MVRPRRAPYRSGAGGPLGGRGRPPRPLVVRAVRSRSWPASPRGPQPPRIRARS. Residues 12–21 show a composition bias toward gly residues; the sequence is GAGGPLGGRG. Low complexity predominate over residues 27–36; that stretch reads LVVRAVRSRS. Position 53 is a phosphoserine (Ser53). The tract at residues 184–416 is interaction with FLOT1; sequence NGFAGCMLFP…QEQQQRGMGG (233 aa).

The protein belongs to the Mediator complex subunit 25 family. PTOV1 subfamily. May interact with CREBBP. Interacts with FLOT1. In terms of processing, ubiquitinated by the CRL2(KLHDC2) complex, which recognizes the diglycine (Gly-Gly) at the C-terminus, leading to its degradation. Ubiquitinated by the CRL2(APPBP2) complex, which recognizes the Arg-Xaa-Xaa-Gly sequence at the C-terminus, leading to its degradation. In terms of tissue distribution, expressed in brain, heart, kidney, liver, placenta, skeletal muscle and small intestine.

The protein resides in the cytoplasm. It is found in the nucleus. It localises to the cell membrane. Its subcellular location is the perinuclear region. Functionally, may activate transcription. Required for nuclear translocation of FLOT1. Promotes cell proliferation. The chain is Prostate tumor-overexpressed gene 1 protein (PTOV1) from Homo sapiens (Human).